Consider the following 316-residue polypeptide: Retinol dehydrogenase 12 (316 aa).

NADP(+) is bound at residue 46 to 52 (GANTGIG). A substrate-binding site is contributed by S175. Y200 (proton acceptor) is an active-site residue.

This sequence belongs to the short-chain dehydrogenases/reductases (SDR) family. Expressed in the retina.

The enzyme catalyses all-trans-retinol + NADP(+) = all-trans-retinal + NADPH + H(+). It catalyses the reaction 11-cis-retinol + NADP(+) = 11-cis-retinal + NADPH + H(+). The catalysed reaction is 9-cis-retinol + NADP(+) = 9-cis-retinal + NADPH + H(+). It carries out the reaction a 4-hydroxynonen-1-ol + NADP(+) = a 4-hydroxynonenal + NADPH + H(+). The enzyme catalyses (E)-non-2-en-1-ol + NADP(+) = (E)-non-2-enal + NADPH + H(+). It catalyses the reaction (Z)-non-6-en-1-ol + NADP(+) = (Z)-non-6-enal + NADPH + H(+). The catalysed reaction is nonan-1-ol + NADP(+) = nonanal + NADPH + H(+). Its pathway is cofactor metabolism; retinol metabolism. Retinoids dehydrogenase/reductase with a clear preference for NADP. Displays high activity towards 9-cis, 11-cis and all-trans-retinal. Shows very weak activity towards 13-cis-retinol. Also exhibits activity, albeit with lower affinity than for retinaldehydes, towards lipid peroxidation products (C9 aldehydes) such as 4-hydroxynonenal and trans-2-nonenal. May play an important function in photoreceptor cells to detoxify 4-hydroxynonenal and potentially other toxic aldehyde products resulting from lipid peroxidation. Has no dehydrogenase activity towards steroids. The sequence is that of Retinol dehydrogenase 12 (RDH12) from Bos taurus (Bovine).